An 851-amino-acid chain; its full sequence is UPF0508 protein CAGL0M08074g (851 aa).

Belongs to the UPF0508 family.

The chain is UPF0508 protein CAGL0M08074g from Candida glabrata (strain ATCC 2001 / BCRC 20586 / JCM 3761 / NBRC 0622 / NRRL Y-65 / CBS 138) (Yeast).